A 99-amino-acid chain; its full sequence is Putative type 4B encapsulin shell protein PF1875 (99 aa).

The protein belongs to the encapsulin family. Family 4B subfamily. As to quaternary structure, may self-assemble into facets and potentially into larger complexes.

Its subcellular location is the encapsulin nanocompartment. May be the encapsulin shell protein in a type 4 A-domain encapsulin nanocompartment system. Its cargo may be upstream glyceraldehyde-3-phosphate dehydrogenase (AC P61879). In Pyrococcus furiosus (strain ATCC 43587 / DSM 3638 / JCM 8422 / Vc1), this protein is Putative type 4B encapsulin shell protein PF1875.